A 480-amino-acid chain; its full sequence is Sestrin-2 (480 aa).

M1 bears the N-acetylmethionine mark. The interval R20 to G43 is disordered. The segment covering E27–A37 has biased composition (basic and acidic residues). The interval G66–T239 is N-terminal domain; mediates the alkylhydroperoxide reductase activity. C125 serves as the catalytic Cysteine sulfenic acid (-SOH) intermediate. A Glycyl lysine isopeptide (Lys-Gly) (interchain with G-Cter in ubiquitin) cross-link involves residue K175. Disordered regions lie at residues D221–G251 and L272–K291. Low complexity predominate over residues E223 to G238. S249 is subject to Phosphoserine. The interval P308–T480 is C-terminal domain; mediates TORC1 regulation. L-leucine-binding positions include T374–T377, T386, and E451.

Belongs to the sestrin family. Interacts with the GATOR2 complex which is composed of MIOS, SEC13, SEH1L, WDR24 and WDR59; the interaction is negatively regulated by leucine. Conveys leucine availability via direct interaction with SEH1L and WDR24 components of the GATOR2 complex. Interacts with RRAGA, RRAGB, RRAGC and RRAGD; may function as a guanine nucleotide dissociation inhibitor for RRAGs and regulate them. May interact with the TORC2 complex. Interacts with KEAP1, RBX1, SQSTM and ULK1; to regulate the degradation of KEAP1. May also associate with the complex composed of TSC1, TSC2 and the AMP-responsive protein kinase/AMPK to regulate TORC1 signaling. May interact with PRDX1. In terms of processing, phosphorylated by ULK1 at multiple sites. Post-translationally, ubiquitinated at Lys-175 by RNF167 via 'Lys-63'-linked polyubiquitination in response to leucine deprivation: ubiquitination promotes SESN2-interaction with the GATOR2 complex, leading to inhibit the TORC1 signaling pathway. Deubiquitinated at Lys-175 by STAMBPL1, promoting the TORC1 signaling pathway. Ubiquitinated by RNF186; ubiquitination mediates proteasomal degradation. Detected in heart, liver and skeletal muscles (at protein level).

The protein resides in the cytoplasm. It catalyses the reaction a hydroperoxide + L-cysteinyl-[protein] = S-hydroxy-L-cysteinyl-[protein] + an alcohol. Its function is as follows. Functions as an intracellular leucine sensor that negatively regulates the mTORC1 signaling pathway through the GATOR complex. In absence of leucine, binds the GATOR subcomplex GATOR2 and prevents mTORC1 signaling. Binding of leucine to SESN2 disrupts its interaction with GATOR2 thereby activating the TORC1 signaling pathway. This stress-inducible metabolic regulator also plays a role in protection against oxidative and genotoxic stresses. May negatively regulate protein translation in response to endoplasmic reticulum stress, via mTORC1. May positively regulate the transcription by NFE2L2 of genes involved in the response to oxidative stress by facilitating the SQSTM1-mediated autophagic degradation of KEAP1. May also mediate TP53 inhibition of TORC1 signaling upon genotoxic stress. Moreover, may prevent the accumulation of reactive oxygen species (ROS) through the alkylhydroperoxide reductase activity born by the N-terminal domain of the protein. Was originally reported to contribute to oxidative stress resistance by reducing PRDX1. However, this could not be confirmed. The protein is Sestrin-2 of Mus musculus (Mouse).